The sequence spans 203 residues: Holliday junction branch migration complex subunit RuvA (203 aa).

The tract at residues Met1 to Leu63 is domain I. The domain II stretch occupies residues Ser64–Lys142. The flexible linker stretch occupies residues Asp143–Gly149. The interval Ile150–Phe203 is domain III.

This sequence belongs to the RuvA family. As to quaternary structure, homotetramer. Forms an RuvA(8)-RuvB(12)-Holliday junction (HJ) complex. HJ DNA is sandwiched between 2 RuvA tetramers; dsDNA enters through RuvA and exits via RuvB. An RuvB hexamer assembles on each DNA strand where it exits the tetramer. Each RuvB hexamer is contacted by two RuvA subunits (via domain III) on 2 adjacent RuvB subunits; this complex drives branch migration. In the full resolvosome a probable DNA-RuvA(4)-RuvB(12)-RuvC(2) complex forms which resolves the HJ.

It localises to the cytoplasm. Functionally, the RuvA-RuvB-RuvC complex processes Holliday junction (HJ) DNA during genetic recombination and DNA repair, while the RuvA-RuvB complex plays an important role in the rescue of blocked DNA replication forks via replication fork reversal (RFR). RuvA specifically binds to HJ cruciform DNA, conferring on it an open structure. The RuvB hexamer acts as an ATP-dependent pump, pulling dsDNA into and through the RuvAB complex. HJ branch migration allows RuvC to scan DNA until it finds its consensus sequence, where it cleaves and resolves the cruciform DNA. The polypeptide is Holliday junction branch migration complex subunit RuvA (Rickettsia bellii (strain OSU 85-389)).